Reading from the N-terminus, the 407-residue chain is uncharacterized protein (407 aa).

Helical transmembrane passes span isoleucine 22–valine 42, leucine 51–alanine 71, alanine 101–valine 121, valine 126–valine 146, valine 154–valine 174, alanine 179–leucine 199, glycine 227–tyrosine 247, leucine 258–isoleucine 278, valine 286–valine 306, valine 309–glycine 329, alanine 347–alanine 367, and alanine 369–leucine 389.

Belongs to the major facilitator superfamily. YhhS family.

Its subcellular location is the cell inner membrane. This is an uncharacterized protein from Burkholderia mallei (strain NCTC 10229).